The sequence spans 317 residues: tRNA dimethylallyltransferase (317 aa).

14–21 is an ATP binding site; the sequence is GPTASGKT. Position 16 to 21 (16 to 21) interacts with substrate; sequence TASGKT. Interaction with substrate tRNA regions lie at residues 39–42 and 163–167; these read DSAL and QRIQR.

This sequence belongs to the IPP transferase family. As to quaternary structure, monomer. It depends on Mg(2+) as a cofactor.

It carries out the reaction adenosine(37) in tRNA + dimethylallyl diphosphate = N(6)-dimethylallyladenosine(37) in tRNA + diphosphate. In terms of biological role, catalyzes the transfer of a dimethylallyl group onto the adenine at position 37 in tRNAs that read codons beginning with uridine, leading to the formation of N6-(dimethylallyl)adenosine (i(6)A). This is tRNA dimethylallyltransferase from Stenotrophomonas maltophilia (strain K279a).